The sequence spans 601 residues: Glutathione-regulated potassium-efflux system protein KefB (601 aa).

The next 13 helical transmembrane spans lie at 4 to 24 (ADLLTAGVLFLFAAVAAVPLA), 29 to 49 (IGAVLGYLLAGIAIGPWGLGF), 55 to 75 (EILHFSELGVVFLMFIIGLEL), 87 to 107 (IFGVGAAQVLLSAAVLAGLLM), 111 to 131 (FLWQAAVVGGIGLAMSSTAMA), 152 to 172 (VLLFQDLAVIPALALVPLLAG), 177 to 197 (HFDWFKVAMKVLAFAVMLIGG), 207 to 227 (FIAASGVREVFTAATLLLVLS), 230 to 250 (LFMDALGLSMALGTFIAGVLL), 262 to 282 (AIDPFKGLLLGLFFISVGMSL), 284 to 304 (LGVLYTHLLWVAASVVILVVI), 324 to 344 (MQFASVLSQGGEFAFVLFSTA), and 356 to 376 (ALLLVTVTLSMMTTPLLMKGI). The RCK N-terminal domain maps to 400 to 519 (KPQVIVVGFG…AGVTQFSRET (120 aa)).

The protein belongs to the monovalent cation:proton antiporter 2 (CPA2) transporter (TC 2.A.37) family. KefB subfamily. In terms of assembly, interacts with the regulatory subunit KefG.

It localises to the cell inner membrane. In terms of biological role, pore-forming subunit of a potassium efflux system that confers protection against electrophiles. Catalyzes K(+)/H(+) antiport. This chain is Glutathione-regulated potassium-efflux system protein KefB, found in Salmonella dublin (strain CT_02021853).